The following is a 136-amino-acid chain: MGDKTKVQVSKLKPGRYIIIDGEPCRIVNVTVSSPGKHGSAKARIEAVGIFDGKVRSIVKPTSAEVDVPIIDKRVGQIIAITPDTVQLMDMETYETFDVPIEGGVDDEVKGQLTEGITVEYWETLGRIQIKKIRGE.

Hypusine is present on K37.

The protein belongs to the eIF-5A family.

The protein localises to the cytoplasm. Its function is as follows. Functions by promoting the formation of the first peptide bond. This chain is Translation initiation factor 5A, found in Thermococcus kodakarensis (strain ATCC BAA-918 / JCM 12380 / KOD1) (Pyrococcus kodakaraensis (strain KOD1)).